A 7705-amino-acid chain; its full sequence is Copine family protein 2 (7705 aa).

Disordered stretches follow at residues 1–61 (MNDY…RHSE), 269–360 (KEGN…NNSQ), 372–408 (SERK…HQQP), 464–492 (GDRA…TSSV), 506–538 (STEP…TADG), 560–614 (DERA…QGPP), 1301–1358 (NRSE…DQQV), 4381–4427 (ELEP…RSES), and 6779–6800 (RDEH…GKFT). Positions 12 to 25 (SSQKSNNQKISNNS) are enriched in low complexity. Basic and acidic residues predominate over residues 269–282 (KEGNNPSCCRERGT). Positions 302-313 (STSTKVAVTSAS) are enriched in low complexity. A compositionally biased stretch (basic residues) spans 318 to 336 (IKDHKKQLKKEKEKKKKMD). Positions 372 to 404 (SERKTAKQREQELLQRSERRSGGRTHSHEEYRR) are enriched in basic and acidic residues. The span at 522 to 532 (ASLSSVQQKQP) shows a compositional bias: polar residues. Over residues 560-587 (DERAKDFLRGDRSSRLSPQSERKNERQI) the composition is skewed to basic and acidic residues. The span at 588–597 (QIRQQSSGPT) shows a compositional bias: polar residues. 2 stretches are compositionally biased toward basic and acidic residues: residues 598-611 (NRRE…EKRQ) and 1301-1335 (NRSE…HTSE). A compositionally biased stretch (low complexity) spans 4397–4409 (RQSRVYRSSSQVR). Composition is skewed to basic and acidic residues over residues 4411-4427 (PSEE…RSES) and 6779-6797 (RDEH…RDGG). The VWFA domain maps to 7475-7673 (NLIFGIDYTK…FHKVMFNAPN (199 aa)).

It belongs to the copine family. Expressed in body wall muscle.

The polypeptide is Copine family protein 2 (cpna-2) (Caenorhabditis elegans).